We begin with the raw amino-acid sequence, 1442 residues long: DNA polymerase III PolC-type (1442 aa).

An Exonuclease domain is found at 426 to 582 (YVVFDVETTG…YDTEATAYIF (157 aa)).

This sequence belongs to the DNA polymerase type-C family. PolC subfamily.

It is found in the cytoplasm. The enzyme catalyses DNA(n) + a 2'-deoxyribonucleoside 5'-triphosphate = DNA(n+1) + diphosphate. Functionally, required for replicative DNA synthesis. This DNA polymerase also exhibits 3' to 5' exonuclease activity. This chain is DNA polymerase III PolC-type, found in Staphylococcus epidermidis (strain ATCC 12228 / FDA PCI 1200).